A 309-amino-acid chain; its full sequence is 2-oxoacid:ferredoxin oxidoreductase 2, subunit beta (309 aa).

[4Fe-4S] cluster contacts are provided by Cys17, Cys20, and Cys51. Thiamine diphosphate is bound by residues 49–52 (IGCS) and His68. Asp93 is a binding site for Mg(2+). Thiamine diphosphate is bound at residue 94 to 95 (GD). Residues Asn121 and Val123 each contribute to the Mg(2+) site. 125-126 (GL) provides a ligand contact to thiamine diphosphate. Cys200 contributes to the [4Fe-4S] cluster binding site.

In terms of assembly, heterodimer composed of an alpha and a beta subunit. [4Fe-4S] cluster serves as cofactor. It depends on thiamine diphosphate as a cofactor. Mg(2+) is required as a cofactor.

It catalyses the reaction a 2-oxocarboxylate + 2 oxidized [2Fe-2S]-[ferredoxin] + CoA = an acyl-CoA + 2 reduced [2Fe-2S]-[ferredoxin] + CO2 + H(+). In terms of biological role, catalyzes the coenzyme A-dependent oxidative decarboxylation of different 2-oxoacids such as pyruvate, 2-oxobutyrate, glyoxylate and 2-oxoglutarate to form their CoA derivatives. In Aeropyrum pernix (strain ATCC 700893 / DSM 11879 / JCM 9820 / NBRC 100138 / K1), this protein is 2-oxoacid:ferredoxin oxidoreductase 2, subunit beta.